Consider the following 503-residue polypeptide: Probable cytosol aminopeptidase (503 aa).

Residues lysine 270 and aspartate 275 each contribute to the Mn(2+) site. Residue lysine 282 is part of the active site. 3 residues coordinate Mn(2+): aspartate 293, aspartate 352, and glutamate 354. The active site involves arginine 356.

It belongs to the peptidase M17 family. Mn(2+) is required as a cofactor.

The protein resides in the cytoplasm. It catalyses the reaction Release of an N-terminal amino acid, Xaa-|-Yaa-, in which Xaa is preferably Leu, but may be other amino acids including Pro although not Arg or Lys, and Yaa may be Pro. Amino acid amides and methyl esters are also readily hydrolyzed, but rates on arylamides are exceedingly low.. The enzyme catalyses Release of an N-terminal amino acid, preferentially leucine, but not glutamic or aspartic acids.. Presumably involved in the processing and regular turnover of intracellular proteins. Catalyzes the removal of unsubstituted N-terminal amino acids from various peptides. The polypeptide is Probable cytosol aminopeptidase (Serratia proteamaculans (strain 568)).